The following is a 363-amino-acid chain: Nicotinamide adenine dinucleotide transporter 2, mitochondrial (363 aa).

Solcar repeat units lie at residues 15–107 (REVA…LKDV), 115–203 (LSIG…IKQY), and 215–305 (LSPG…MLRF). The next 6 helical transmembrane spans lie at 21-41 (AGAG…LDVI), 82-102 (GLSP…SVYG), 121-141 (MIAA…LWVV), 176-196 (LYSG…QFPA), 215-235 (LSPG…SILT), and 277-299 (LYRG…FTTY). The interval 313-363 (ETNRSDDRRREEERKNLVSRRGEEEDKDLGLRESQTQSNKISTPHIPLGSK) is disordered. Basic and acidic residues predominate over residues 315-343 (NRSDDRRREEERKNLVSRRGEEEDKDLGL). The segment covering 345–354 (ESQTQSNKIS) has biased composition (polar residues).

This sequence belongs to the mitochondrial carrier (TC 2.A.29) family. Highly expressed in young meristematic shoot area, vascular bundles of leaves, developing siliques including the funiculi, petal veins, developing pollen and central cylinder of roots.

It is found in the mitochondrion membrane. With respect to regulation, inhibited by pyridoxal 5'-phosphate, bathophenanthroline, tannic acid, mersalyl, mercuric chloride, p-hydroxymercuribenzoate, p-hydroxymercuribenzoate sulfonate, bromocresol purple and N-ethylmaleimide. In terms of biological role, mediates the NAD(+) import into chloroplast. Favors the NAD(+)(in)/ADP or AMP(out) antiport exchange, but is also able to catalyze a low unidirectional transport (uniport) of NAD(+). Transports NAD(+), nicotinic acid adenine dinucleotide, nicotinamide mononucleotide, nicotinic acid mononucleotide, FAD, FMN, TTP, TDP, TMP, UTP, UDP, UMP, CTP, CDP, CMP, GTP, GDP, GMP, 3'-AMP, ATP, ADP and AMP, has low transport activity with cAMP, NADH and alpha-NAD(+), and has no activity with NADP(+), NADPH, nicotinamide, nicotinic acid, adenosine, thiamine mono- or diphosphate, inorganic phosphate, CoA, folate, NaCl, malate, malonate, citrate, fumarate, aspartate, glutamate, S-adenosylmethionine, lysine, arginine, and ornithine. In Arabidopsis thaliana (Mouse-ear cress), this protein is Nicotinamide adenine dinucleotide transporter 2, mitochondrial (NDT2).